Reading from the N-terminus, the 418-residue chain is Equilibrative nucleotide transporter 3 (418 aa).

11 helical membrane-spanning segments follow: residues 20-40 (MVVC…MLTI), 56-76 (VLTL…AYHE), 86-106 (LIGY…DLAT), 112-132 (IGPY…DATV), 142-162 (LMCP…GALT), 186-206 (MFLA…AYVF), 264-284 (YAVN…GFLY), 291-311 (GLGD…DLVG), 326-346 (KLIT…YFTA), 353-373 (WMIM…VCIM), and 392-412 (LVIF…LWLI).

This sequence belongs to the SLC29A/ENT transporter (TC 2.A.57) family. Expressed in root tips, vasculature of roots and leaves, and meristems of leaf primordia. Expressed in flowers and siliques.

It localises to the cell membrane. Its function is as follows. Nucleoside transporter that functions as a pyrimidine nucleoside carrier in all organs. Has high affinity for adenosine and uridine when expressed in a heterologous system (yeast). Mediates proton-dependent adenosine or uridine transport in Xenopus oocytes. This Arabidopsis thaliana (Mouse-ear cress) protein is Equilibrative nucleotide transporter 3.